Consider the following 1342-residue polypeptide: DNA-directed RNA polymerase subunit beta (1342 aa).

The protein belongs to the RNA polymerase beta chain family. The RNAP catalytic core consists of 2 alpha, 1 beta, 1 beta' and 1 omega subunit. When a sigma factor is associated with the core the holoenzyme is formed, which can initiate transcription.

The enzyme catalyses RNA(n) + a ribonucleoside 5'-triphosphate = RNA(n+1) + diphosphate. In terms of biological role, DNA-dependent RNA polymerase catalyzes the transcription of DNA into RNA using the four ribonucleoside triphosphates as substrates. In Aeromonas hydrophila subsp. hydrophila (strain ATCC 7966 / DSM 30187 / BCRC 13018 / CCUG 14551 / JCM 1027 / KCTC 2358 / NCIMB 9240 / NCTC 8049), this protein is DNA-directed RNA polymerase subunit beta.